A 474-amino-acid polypeptide reads, in one-letter code: Transcription factor fscB (474 aa).

Disordered regions lie at residues 114-153 and 207-242; these read VDEL…SYWT and GKEV…NPAP. Over residues 120–131 the composition is skewed to low complexity; the sequence is SSDTRSSLSPSS. Positions 132–153 are enriched in polar residues; the sequence is HNTTTGHETGLSSVTPPQSYWT. Residues 207–221 are compositionally biased toward basic and acidic residues; that stretch reads GKEVTKRNKRSRTEA. Polar residues predominate over residues 222 to 240; the sequence is QEASNSPCASSTADSQTNP.

Belongs to the POU transcription factor family. Class-3 subfamily.

The protein resides in the nucleus. Its function is as follows. Transcription factor; part of the fragmented gene cluster that mediates the biosynthesis of fusarochromene, a tryptophan-derived metabolite closely related to a group of mycotoxins including fusarochromanone. This chain is Transcription factor fscB, found in Fusarium equiseti (Fusarium scirpi).